The primary structure comprises 142 residues: Nucleoside diphosphate kinase (142 aa).

Residues lysine 11, phenylalanine 59, arginine 87, threonine 93, arginine 104, and asparagine 114 each contribute to the ATP site. Histidine 117 acts as the Pros-phosphohistidine intermediate in catalysis.

This sequence belongs to the NDK family. In terms of assembly, homotetramer. The cofactor is Mg(2+).

The protein localises to the cytoplasm. The catalysed reaction is a 2'-deoxyribonucleoside 5'-diphosphate + ATP = a 2'-deoxyribonucleoside 5'-triphosphate + ADP. The enzyme catalyses a ribonucleoside 5'-diphosphate + ATP = a ribonucleoside 5'-triphosphate + ADP. Its function is as follows. Major role in the synthesis of nucleoside triphosphates other than ATP. The ATP gamma phosphate is transferred to the NDP beta phosphate via a ping-pong mechanism, using a phosphorylated active-site intermediate. The chain is Nucleoside diphosphate kinase from Photobacterium profundum (strain SS9).